We begin with the raw amino-acid sequence, 362 residues long: Spermidine/putrescine import ATP-binding protein PotA (362 aa).

The 231-residue stretch at 6 to 236 folds into the ABC transporter domain; it reads VELKHVGKRY…PVNHFVADFI (231 aa). 38 to 45 contributes to the ATP binding site; the sequence is GPSGSGKT.

The protein belongs to the ABC transporter superfamily. Spermidine/putrescine importer (TC 3.A.1.11.1) family. The complex is composed of two ATP-binding proteins (PotA), two transmembrane proteins (PotB and PotC) and a solute-binding protein (PotD).

The protein localises to the cell membrane. It carries out the reaction ATP + H2O + polyamine-[polyamine-binding protein]Side 1 = ADP + phosphate + polyamineSide 2 + [polyamine-binding protein]Side 1.. Functionally, part of the ABC transporter complex PotABCD involved in spermidine/putrescine import. Responsible for energy coupling to the transport system. The chain is Spermidine/putrescine import ATP-binding protein PotA from Lacticaseibacillus paracasei (strain ATCC 334 / BCRC 17002 / CCUG 31169 / CIP 107868 / KCTC 3260 / NRRL B-441) (Lactobacillus paracasei).